The primary structure comprises 89 residues: MTLANIKSAKKRAVQSEKRRQHNASQRSMMRTFIKKVYAAIATGDKAASQTAFVEMQKVVDRMASKGLIHANKAANHKAKLVAQIKKLA.

The disordered stretch occupies residues 1–28; sequence MTLANIKSAKKRAVQSEKRRQHNASQRS.

The protein belongs to the bacterial ribosomal protein bS20 family.

Functionally, binds directly to 16S ribosomal RNA. The protein is Small ribosomal subunit protein bS20 of Haemophilus ducreyi (strain 35000HP / ATCC 700724).